Reading from the N-terminus, the 874-residue chain is Alanine--tRNA ligase (874 aa).

Zn(2+)-binding residues include H562, H566, C664, and H668.

This sequence belongs to the class-II aminoacyl-tRNA synthetase family. Requires Zn(2+) as cofactor.

The protein resides in the cytoplasm. It carries out the reaction tRNA(Ala) + L-alanine + ATP = L-alanyl-tRNA(Ala) + AMP + diphosphate. Catalyzes the attachment of alanine to tRNA(Ala) in a two-step reaction: alanine is first activated by ATP to form Ala-AMP and then transferred to the acceptor end of tRNA(Ala). Also edits incorrectly charged Ser-tRNA(Ala) and Gly-tRNA(Ala) via its editing domain. The sequence is that of Alanine--tRNA ligase from Neisseria meningitidis serogroup A / serotype 4A (strain DSM 15465 / Z2491).